The primary structure comprises 104 residues: uncharacterized protein (104 aa).

Residues M1–A18 form the signal peptide. N27 is a glycosylation site (N-linked (GlcNAc...) asparagine; by host).

This is an uncharacterized protein from Fowl adenovirus A serotype 1 (strain CELO / Phelps) (FAdV-1).